We begin with the raw amino-acid sequence, 486 residues long: Glutamyl-tRNA(Gln) amidotransferase subunit A (486 aa).

Residues Lys-75 and Ser-150 each act as charge relay system in the active site. Ser-174 (acyl-ester intermediate) is an active-site residue.

This sequence belongs to the amidase family. GatA subfamily. In terms of assembly, heterotrimer of A, B and C subunits.

The catalysed reaction is L-glutamyl-tRNA(Gln) + L-glutamine + ATP + H2O = L-glutaminyl-tRNA(Gln) + L-glutamate + ADP + phosphate + H(+). In terms of biological role, allows the formation of correctly charged Gln-tRNA(Gln) through the transamidation of misacylated Glu-tRNA(Gln) in organisms which lack glutaminyl-tRNA synthetase. The reaction takes place in the presence of glutamine and ATP through an activated gamma-phospho-Glu-tRNA(Gln). This is Glutamyl-tRNA(Gln) amidotransferase subunit A from Trichormus variabilis (strain ATCC 29413 / PCC 7937) (Anabaena variabilis).